We begin with the raw amino-acid sequence, 83 residues long: Mu-theraphotoxin-Hhn2k (83 aa).

Positions 1–21 (MKASMFLALAGLVLLFVVDYA) are cleaved as a signal peptide. Residues 22–48 (SESEEKEFPIELLSKIFAVDVFKGEER) constitute a propeptide that is removed on maturation. Disulfide bonds link Cys-50-Cys-65, Cys-57-Cys-70, and Cys-64-Cys-77. Leu-81 bears the Leucine amide mark.

Belongs to the neurotoxin 10 (Hwtx-1) family. 15 (Hntx-3) subfamily. Monomer. Expressed by the venom gland.

It localises to the secreted. In terms of biological role, lethal neurotoxin. Selectively blocks tetrodotoxin-sensitive voltage-gated sodium channels (Nav). Does not affect tetrodotoxin-resistant voltage-gated sodium channels or calcium channels. This Cyriopagopus hainanus (Chinese bird spider) protein is Mu-theraphotoxin-Hhn2k.